A 1185-amino-acid polypeptide reads, in one-letter code: Syntaxin-binding protein 5-like (1185 aa).

Residue Met1 is modified to N-acetylmethionine. The tract at residues Ala15–Leu44 is disordered. Over residues Ser16–Ser26 the composition is skewed to low complexity. WD repeat units lie at residues Thr73 to Gln106, Val113 to Phe152, Ile157 to Ile193, His212 to Val246, Ile252 to Pro284, Pro306 to Thr348, Ile356 to Leu390, Thr412 to Lys489, Gln517 to Ile628, and Thr642 to Asn704. Thr567 bears the Phosphothreonine mark. The tract at residues Thr567 to Val601 is disordered. Ser573, Ser588, and Ser592 each carry phosphoserine. Residues Asp578 to Ser592 are compositionally biased toward low complexity. A Phosphothreonine modification is found at Thr595. Ser598 is modified (phosphoserine). Arg708 is subject to Omega-N-methylarginine. The segment covering Thr747 to Arg768 has biased composition (polar residues). Residues Thr747 to Ser770 are disordered. Phosphoserine occurs at positions 762, 764, 765, 770, 771, 792, 799, 811, 819, 821, and 822. 4 WD repeats span residues Ile831 to Phe888, Thr897 to Leu968, Ile973 to Asn1017, and Cys1031 to Gln1054. Thr1092 bears the Phosphothreonine mark. Residues Ser1120–Lys1180 form the v-SNARE coiled-coil homology domain.

This sequence belongs to the WD repeat L(2)GL family. In terms of assembly, interacts with STX1A and STX4. Post-translationally, phosphorylated, leading to STXBP5L increased turnover and subsequent de-repression of insulin secretion. Phosphorylated on serine residues in response to glucose or phorbol esters. In terms of processing, ubiquitinated by the E3 ligase SYVN1, leading to STXBP5L proteasomal degradation. Detected in hippocampus and cerebellum. Expressed in pancreatic beta-cells where it modulates insulin secretion.

Its subcellular location is the cytoplasm. It is found in the cell membrane. The protein resides in the membrane. Functionally, plays a role in vesicle trafficking and exocytosis inhibition. In pancreatic beta-cells, inhibits insulin secretion probably by interacting with and regulating STX1A and STX4, key t-SNARE proteins involved in the fusion of insulin granules to the plasma membrane. Also plays a role in neurotransmitter release by inhibiting basal acetylcholine release from axon terminals and by preventing synaptic fatigue upon repetitive stimulation. Promotes as well axonal outgrowth. In Mus musculus (Mouse), this protein is Syntaxin-binding protein 5-like (Stxbp5l).